Consider the following 142-residue polypeptide: Glycine-rich RNA-binding protein 1 (142 aa).

One can recognise an RRM domain in the interval 1–65 (NSLHSAFSTY…RNITVNEAQS (65 aa)). Residues 48 to 101 (MNGKELDGRNITVNEAQSRGGRGGGGGGGYGGGRGGGGGYGRRDGGGGGYGGGG) are disordered. The span at 67–101 (GGRGGGGGGGYGGGRGGGGGYGRRDGGGGGYGGGG) shows a compositional bias: gly residues.

Functionally, possibly has a role in RNA transcription or processing during stress. The sequence is that of Glycine-rich RNA-binding protein 1 (GRP1) from Sorghum bicolor (Sorghum).